The chain runs to 93 residues: Em protein (93 aa).

Residues 1–93 (MASGQQERSQ…IDESKFKTKS (93 aa)) form a disordered region. Basic and acidic residues-rich tracts occupy residues 9-19 (SQLDRKAREGE), 38-52 (AEGR…REQM), and 73-93 (GGDR…KTKS).

The protein belongs to the small hydrophilic plant seed protein family.

Functionally, it is thought to provide protection for the cytoplasm during the desiccation stage of embryo development. The sequence is that of Em protein (EM) from Triticum aestivum (Wheat).